Consider the following 117-residue polypeptide: MDKKTARLSRSKRTRIKLKELGHTRLCVYRTPRHVYAQVISGDGSTVLAAASTVEKDVKAKCKYTGNVNSAAIVGEVIANRCKEKGISQVAFDRSGYKYHGRVKALAEAAREHGLQF.

It belongs to the universal ribosomal protein uL18 family. As to quaternary structure, part of the 50S ribosomal subunit; part of the 5S rRNA/L5/L18/L25 subcomplex. Contacts the 5S and 23S rRNAs.

This is one of the proteins that bind and probably mediate the attachment of the 5S RNA into the large ribosomal subunit, where it forms part of the central protuberance. This Francisella philomiragia subsp. philomiragia (strain ATCC 25017 / CCUG 19701 / FSC 153 / O#319-036) protein is Large ribosomal subunit protein uL18.